Consider the following 630-residue polypeptide: Probable potassium transport system protein Kup (630 aa).

The next 12 helical transmembrane spans lie at 17-37, 51-71, 105-125, 144-164, 175-195, 218-238, 255-275, 283-303, 344-364, 374-394, 402-422, and 428-448; these read LAIA…LYSL, PSAI…VVGI, ITGL…GDAV, PQLS…LFWI, LFGP…VYHI, VLLA…AEAL, YVLV…LLLL, PFFL…STVA, IYVP…VIGF, YGIA…VVMV, LLVA…FGAN, and QGGW…MTWY.

This sequence belongs to the HAK/KUP transporter (TC 2.A.72) family.

The protein localises to the cell inner membrane. It carries out the reaction K(+)(in) + H(+)(in) = K(+)(out) + H(+)(out). Transport of potassium into the cell. Likely operates as a K(+):H(+) symporter. The chain is Probable potassium transport system protein Kup from Burkholderia thailandensis (strain ATCC 700388 / DSM 13276 / CCUG 48851 / CIP 106301 / E264).